The sequence spans 450 residues: Protein W (450 aa).

Residues 53–92 (SGESEQVEGGMSKDDGDVERRNLEDLSSTSPTDGTIGKRV) are disordered. Over residues 63-76 (MSKDDGDVERRNLE) the composition is skewed to basic and acidic residues. Serine 257 carries the post-translational modification Phosphoserine; by host. The tract at residues 265 to 324 (ISPEDEEPSSVGGKPNESIGRTIEGQSIRDNLQAKDNKSTDVPGAGPKDSAVKEEPPQKR) is disordered. Phosphoserine; by host is present on serine 350. Disordered stretches follow at residues 384 to 403 (VQTADRQRPGTPMPKSRGIP) and 429 to 450 (PGMFEDHPPTKKARVSMRRMSN). Positions 438 to 450 (TKKARVSMRRMSN) are enriched in basic residues. The short motif at 439–442 (KKAR) is the Nuclear localization signal element.

Interacts with host STAT1.

The protein resides in the host nucleus. Functionally, prevent the establishment of cellular antiviral state by blocking the interferon-alpha/beta (IFN-alpha/beta). Interacts with host STAT1 protein in the nucleus, blocking it's phosphorylation by IFN-alpha/beta. Also blocks antiviral state induced by Toll-like receptor 3/TLR3 binding to dsRNA. In Cynopterus brachyotis (Lesser short-nosed fruit bat), this protein is Protein W (P/V/C).